The following is a 199-amino-acid chain: Large ribosomal subunit protein uL5 (199 aa).

Belongs to the universal ribosomal protein uL5 family. Part of the 50S ribosomal subunit; part of the 5S rRNA/L5/L18/L25 subcomplex. Contacts the 5S rRNA and the P site tRNA. Forms a bridge to the 30S subunit in the 70S ribosome.

Its function is as follows. This is one of the proteins that bind and probably mediate the attachment of the 5S RNA into the large ribosomal subunit, where it forms part of the central protuberance. In the 70S ribosome it contacts protein S13 of the 30S subunit (bridge B1b), connecting the 2 subunits; this bridge is implicated in subunit movement. Contacts the P site tRNA; the 5S rRNA and some of its associated proteins might help stabilize positioning of ribosome-bound tRNAs. In Frankia casuarinae (strain DSM 45818 / CECT 9043 / HFP020203 / CcI3), this protein is Large ribosomal subunit protein uL5.